The primary structure comprises 506 residues: Chromodomain Y-like protein 2 (506 aa).

Residues 7–67 (YEVERIVDKR…LHMSKDKRIK (61 aa)) form the Chromo domain. Residues 64-177 (KRIKSGKQSS…RHFGNGSHQP (114 aa)) are disordered. Residues 88-98 (KLSHRPSDPGK) are compositionally biased toward basic and acidic residues. Over residues 101–120 (GTSHKRKRINPPLAKPKKGY) the composition is skewed to basic residues. Residues 133–143 (KTVSYRTTPSG) show a composition bias toward polar residues.

As to quaternary structure, interacts (via chromo domain) with histone H3K9me3. In terms of tissue distribution, ubiquitously expressed.

Its subcellular location is the nucleus. The chain is Chromodomain Y-like protein 2 (CDYL2) from Homo sapiens (Human).